An 81-amino-acid polypeptide reads, in one-letter code: Large ribosomal subunit protein bL31 (81 aa).

It belongs to the bacterial ribosomal protein bL31 family. Type A subfamily. In terms of assembly, part of the 50S ribosomal subunit.

Its function is as follows. Binds the 23S rRNA. The chain is Large ribosomal subunit protein bL31 (rpmE) from Fusobacterium nucleatum subsp. nucleatum (strain ATCC 25586 / DSM 15643 / BCRC 10681 / CIP 101130 / JCM 8532 / KCTC 2640 / LMG 13131 / VPI 4355).